We begin with the raw amino-acid sequence, 141 residues long: Nucleoside diphosphate kinase (141 aa).

Residues Lys-11, Phe-59, Arg-87, Thr-93, Arg-104, and Asn-114 each contribute to the ATP site. The Pros-phosphohistidine intermediate role is filled by His-117.

The protein belongs to the NDK family. As to quaternary structure, homotetramer. The cofactor is Mg(2+).

It localises to the cytoplasm. The catalysed reaction is a 2'-deoxyribonucleoside 5'-diphosphate + ATP = a 2'-deoxyribonucleoside 5'-triphosphate + ADP. The enzyme catalyses a ribonucleoside 5'-diphosphate + ATP = a ribonucleoside 5'-triphosphate + ADP. Functionally, major role in the synthesis of nucleoside triphosphates other than ATP. The ATP gamma phosphate is transferred to the NDP beta phosphate via a ping-pong mechanism, using a phosphorylated active-site intermediate. This chain is Nucleoside diphosphate kinase, found in Cupriavidus necator (strain ATCC 17699 / DSM 428 / KCTC 22496 / NCIMB 10442 / H16 / Stanier 337) (Ralstonia eutropha).